The sequence spans 146 residues: Hemoglobin subunit beta (146 aa).

Residues 2 to 146 (HWTAEEKQLI…VAHALARKYH (145 aa)) form the Globin domain. 2 residues coordinate heme b: His-63 and His-92.

Belongs to the globin family. As to quaternary structure, heterotetramer of two alpha chains and two beta chains. As to expression, red blood cells.

Functionally, involved in oxygen transport from the lung to the various peripheral tissues. This is Hemoglobin subunit beta (HBB) from Aquila chrysaetos (Golden eagle).